The sequence spans 240 residues: Glyceraldehyde 3-phosphate phosphatase (240 aa).

The protein belongs to the HAD-like hydrolase superfamily. Mg(2+) serves as cofactor.

Catalyzes the dephosphorylation of D,L-glyceraldehyde 3-phosphate in vitro. The sequence is that of Glyceraldehyde 3-phosphate phosphatase from Pyrococcus furiosus (strain ATCC 43587 / DSM 3638 / JCM 8422 / Vc1).